A 26-amino-acid polypeptide reads, in one-letter code: Fumarylacetoacetate hydrolase domain-containing protein 2A (26 aa).

It belongs to the FAH family. Requires Ca(2+) as cofactor. It depends on Mg(2+) as a cofactor.

Its function is as follows. May have hydrolase activity. The polypeptide is Fumarylacetoacetate hydrolase domain-containing protein 2A (Mesocricetus auratus (Golden hamster)).